A 170-amino-acid polypeptide reads, in one-letter code: ATP synthase subunit b (170 aa).

A helical transmembrane segment spans residues 11 to 31 (AFTFGDAFFTLFAFAILLVLI).

This sequence belongs to the ATPase B chain family. In terms of assembly, F-type ATPases have 2 components, F(1) - the catalytic core - and F(0) - the membrane proton channel. F(1) has five subunits: alpha(3), beta(3), gamma(1), delta(1), epsilon(1). F(0) has three main subunits: a(1), b(2) and c(10-14). The alpha and beta chains form an alternating ring which encloses part of the gamma chain. F(1) is attached to F(0) by a central stalk formed by the gamma and epsilon chains, while a peripheral stalk is formed by the delta and b chains.

The protein resides in the cell membrane. F(1)F(0) ATP synthase produces ATP from ADP in the presence of a proton or sodium gradient. F-type ATPases consist of two structural domains, F(1) containing the extramembraneous catalytic core and F(0) containing the membrane proton channel, linked together by a central stalk and a peripheral stalk. During catalysis, ATP synthesis in the catalytic domain of F(1) is coupled via a rotary mechanism of the central stalk subunits to proton translocation. In terms of biological role, component of the F(0) channel, it forms part of the peripheral stalk, linking F(1) to F(0). The protein is ATP synthase subunit b of Listeria welshimeri serovar 6b (strain ATCC 35897 / DSM 20650 / CCUG 15529 / CIP 8149 / NCTC 11857 / SLCC 5334 / V8).